The following is a 191-amino-acid chain: Fe/S biogenesis protein NfuA (191 aa).

[4Fe-4S] cluster contacts are provided by C149 and C152.

The protein belongs to the NfuA family. Homodimer. [4Fe-4S] cluster serves as cofactor.

Its function is as follows. Involved in iron-sulfur cluster biogenesis. Binds a 4Fe-4S cluster, can transfer this cluster to apoproteins, and thereby intervenes in the maturation of Fe/S proteins. Could also act as a scaffold/chaperone for damaged Fe/S proteins. The polypeptide is Fe/S biogenesis protein NfuA (Buchnera aphidicola subsp. Baizongia pistaciae (strain Bp)).